Reading from the N-terminus, the 478-residue chain is Aspartyl/glutamyl-tRNA(Asn/Gln) amidotransferase subunit B (478 aa).

The protein belongs to the GatB/GatE family. GatB subfamily. In terms of assembly, heterotrimer of A, B and C subunits.

It catalyses the reaction L-glutamyl-tRNA(Gln) + L-glutamine + ATP + H2O = L-glutaminyl-tRNA(Gln) + L-glutamate + ADP + phosphate + H(+). The catalysed reaction is L-aspartyl-tRNA(Asn) + L-glutamine + ATP + H2O = L-asparaginyl-tRNA(Asn) + L-glutamate + ADP + phosphate + 2 H(+). Allows the formation of correctly charged Asn-tRNA(Asn) or Gln-tRNA(Gln) through the transamidation of misacylated Asp-tRNA(Asn) or Glu-tRNA(Gln) in organisms which lack either or both of asparaginyl-tRNA or glutaminyl-tRNA synthetases. The reaction takes place in the presence of glutamine and ATP through an activated phospho-Asp-tRNA(Asn) or phospho-Glu-tRNA(Gln). This is Aspartyl/glutamyl-tRNA(Asn/Gln) amidotransferase subunit B from Lachnoclostridium phytofermentans (strain ATCC 700394 / DSM 18823 / ISDg) (Clostridium phytofermentans).